The chain runs to 762 residues: LON peptidase N-terminal domain and RING finger protein 1 (762 aa).

The segment at 1-35 (MSSPAVARASPGGNREASGGPRSRNGPWEVGGGGE) is disordered. The TPR 1 repeat unit spans residues 47-80 (WELLLRRGELLALGGHLKGALEAFAAALRRGAPA). The RING-type 1 zinc-finger motif lies at 118-154 (CLSCRGFLSEPVTVPCGHSYCRRCLRRELRARCRLCR). TPR repeat units follow at residues 201 to 233 (ARAAGRLGELLHEGRYREALAAACDALRAEPSD), 235 to 267 (TLKIYRAESYAGLQEFKAALEDLNAVLFQLPNW), and 268 to 301 (PEVYFRKGKVLQDAGFLGDALQLFLQCLALDEDF). Serine 420 carries the post-translational modification Phosphoserine. Residues 468–506 (CSLCMRLFFEPVTTPCGHSFCKNCLERCLDHAPYCPLCK) form an RING-type 2 zinc finger. One can recognise a Lon N-terminal domain in the interval 547–757 (TAELSHLTKN…KIQHILTYFS (211 aa)).

This Mus musculus (Mouse) protein is LON peptidase N-terminal domain and RING finger protein 1 (Lonrf1).